The chain runs to 202 residues: Large ribosomal subunit protein bL9 (202 aa).

The disordered stretch occupies residues 168-202 (DEAGFTEDYDPNAEPGEIPTELQDEAPAAEATDEA). The span at 192–202 (EAPAAEATDEA) shows a compositional bias: low complexity.

This sequence belongs to the bacterial ribosomal protein bL9 family.

Its function is as follows. Binds to the 23S rRNA. The chain is Large ribosomal subunit protein bL9 from Rhizorhabdus wittichii (strain DSM 6014 / CCUG 31198 / JCM 15750 / NBRC 105917 / EY 4224 / RW1) (Sphingomonas wittichii).